The sequence spans 571 residues: MYYMLIGFIIVVIAVISAGYILKRKHYQRINELEETKIKLRERPVIDELSKVKKLKLTGQTEALFESWRSSWDEIETRLFPDLEEVLLEAEMNADRYRFRSATNTENDIEQMLVVIEKQMDQILGGLKELLISEEKNAKESRMTKEKFAELRREVLTRGFKLGETLPYVEAKLNSLAENLNRYDSLTDQADHLEAREIVISVQKEMAVIEAQMERIPSLLHETDTILPEEMNKLRAGYEEMVRKGYYLAQMELDKEISRMKTQIEKMKQNVINLDLDEAEEGIEELHNEIELFYDTLEHEAEARHFVKENHSPTSDKLKRQNTVSDALAEQITEVKQTYHVAEDDLAVYLKTSAKLSEAKENFEQLTALIASGEIAYSAAQDTLKEIDAALLSISSEQDNFAEELRSLRKDELEARDDAERMRRAIITLDRKMERERLPGLPEEYLSLRAHMGESIDALEKRLEEKPLNMKAVSQDWRIAEEDLTHLTEKAEEMMENVRLVEHVIQYANRYRLRNKELADELVQAENHFYNDYQYKKALEIAVTALEKVETGAFKKVEKAYESKVSVDDIE.

At 1–3 (MYY) the chain is on the extracellular side. A helical transmembrane segment spans residues 4-22 (MLIGFIIVVIAVISAGYIL). The Cytoplasmic segment spans residues 23–571 (KRKHYQRINE…ESKVSVDDIE (549 aa)). Coiled coils occupy residues 170–215 (EAKL…QMER), 248–299 (LAQM…TLEH), 326–374 (DALA…ASGE), 400–437 (NFAE…ERER), and 478–529 (RIAE…ENHF).

This sequence belongs to the EzrA family.

The protein resides in the cell membrane. In terms of biological role, negative regulator of FtsZ ring formation; modulates the frequency and position of FtsZ ring formation. Inhibits FtsZ ring formation at polar sites. Interacts either with FtsZ or with one of its binding partners to promote depolymerization. The chain is Septation ring formation regulator EzrA from Listeria innocua serovar 6a (strain ATCC BAA-680 / CLIP 11262).